A 142-amino-acid polypeptide reads, in one-letter code: MVHFTAEEKAAITSLWGKMNVEEAGGEALGRLLVVYPWTQRFFDNFGNLSSPSAILGNPKVKAHGKKVLTSFGDAIKNMDNLKTTFAKLSELHCDKLHVDPENFRLLGNVLVIILATHFGKEFTPEVQAASQKLVSAVAIAL.

The Globin domain maps to 3-142 (HFTAEEKAAI…KLVSAVAIAL (140 aa)). Ser14 and Ser51 each carry phosphoserine. Heme b contacts are provided by His64 and His93.

It belongs to the globin family. In terms of assembly, heterotetramer of two alpha chains and two epsilon chains in early embryonic hemoglobin Gower-2; two zeta chains and two epsilon chains in early embryonic hemoglobin Gower-1. In terms of tissue distribution, red blood cells.

Its function is as follows. The epsilon chain is a beta-type chain of early mammalian embryonic hemoglobin. This is Hemoglobin subunit epsilon (HBE1) from Callithrix geoffroyi (Geoffroy's marmoset).